The following is a 348-amino-acid chain: UPF0283 membrane protein HAPS_0079 (348 aa).

The next 3 membrane-spanning stretches (helical) occupy residues 57–77 (FLAA…QWLI), 86–106 (IYFA…GAII), and 203–223 (ENAI…MVAW).

It belongs to the UPF0283 family.

The protein resides in the cell inner membrane. The protein is UPF0283 membrane protein HAPS_0079 of Glaesserella parasuis serovar 5 (strain SH0165) (Haemophilus parasuis).